Consider the following 158-residue polypeptide: Transcription elongation factor GreA (158 aa).

Positions 47–74 (NSEYDEAKNEQAFTEGRIIQLENMLKNA) form a coiled coil.

It belongs to the GreA/GreB family.

Necessary for efficient RNA polymerase transcription elongation past template-encoded arresting sites. The arresting sites in DNA have the property of trapping a certain fraction of elongating RNA polymerases that pass through, resulting in locked ternary complexes. Cleavage of the nascent transcript by cleavage factors such as GreA or GreB allows the resumption of elongation from the new 3'terminus. GreA releases sequences of 2 to 3 nucleotides. This Clostridium perfringens (strain ATCC 13124 / DSM 756 / JCM 1290 / NCIMB 6125 / NCTC 8237 / Type A) protein is Transcription elongation factor GreA.